Consider the following 134-residue polypeptide: UPF0412 protein YaaI (134 aa).

The N-terminal stretch at 1-23 (MKSVFTLSASLAISLLLCCTAQA) is a signal peptide.

Belongs to the UPF0412 family.

This is UPF0412 protein YaaI from Escherichia coli (strain SMS-3-5 / SECEC).